Consider the following 90-residue polypeptide: uncharacterized protein (90 aa).

A signal peptide spans 1–21 (MFKFSIPLLLFIFLFFSCINS). Residues 56 to 90 (SNEKLPERILSGSSGSCSSCSISSSNGSSSRSSKQ) are disordered. Low complexity predominate over residues 66–90 (SGSSGSCSSCSISSSNGSSSRSSKQ). An N-linked (GlcNAc...) asparagine glycan is attached at N81.

This is an uncharacterized protein from Dictyostelium discoideum (Social amoeba).